Consider the following 313-residue polypeptide: Uracil-DNA glycosylase (313 aa).

Over residues 1-12 the composition is skewed to polar residues; that stretch reads MIGQKTLYSFFS. Residues 1-25 are interaction with FAM72A; the sequence is MIGQKTLYSFFSPSPARKRHAPSPE. Positions 1 to 29 are mitochondrial localization signal; it reads MIGQKTLYSFFSPSPARKRHAPSPEPAVQ. Residues 1–68 form a disordered region; sequence MIGQKTLYSF…GTPPSSPLSA (68 aa). Phosphoserine is present on residues Ser12 and Ser14. Residues 17 to 19 carry the Important for nuclear sorting motif; it reads RKR. Residue Ser23 is modified to Phosphoserine. Over residues 43–53 the composition is skewed to low complexity; that stretch reads AAAIPAKKAPA. Thr60 bears the Phosphothreonine mark. Ser64 is modified (phosphoserine). The tract at residues 73-88 is interaction with RPA2; it reads RIQRNKAAALLRLAAR. Position 153 (Gln153) interacts with uracil. The active-site Proton acceptor is the Asp154. His157 contacts dsDNA. Phe167 is a binding site for uracil. Ser178 contributes to the dsDNA binding site. Uracil is bound at residue Asn213. DsDNA contacts are provided by Ser256, His277, Ser279, Ser282, and Arg285. Residue His277 coordinates uracil. An N6-acetyllysine modification is found at Lys295.

It belongs to the uracil-DNA glycosylase (UDG) superfamily. UNG family. In terms of assembly, monomer. As to quaternary structure, interacts with RPA2 subunit of the RPA trimer; this interaction mediates UNG2 recruitment to RPA-coated single-stranded DNA at stalled replication forks. Interacts with PCNA; this interaction mediates UNG2 recruitment to S-phase replication foci. Interacts (via N-terminus) with FAM72A. (Microbial infection) Interacts with HIV-1 Vpr. In terms of processing, processed by mitochondrial serine or cysteine peptidases to yield a mature dominant form that lacks N-terminal 29 amino acid residues and another minor form that lacks N-terminal 77 amino acid residues. The catalytic activity of UNG1 delta29 is not product-inhibited by AP sites.

Its subcellular location is the mitochondrion. The protein resides in the nucleus. The catalysed reaction is Hydrolyzes single-stranded DNA or mismatched double-stranded DNA and polynucleotides, releasing free uracil.. It carries out the reaction a 2'-deoxyuridine in single-stranded DNA + H2O = a 2'-deoxyribose 5'-monophosphate in single-stranded DNA + uracil. The enzyme catalyses a 2'-deoxyuridine in double-stranded DNA + H2O = a 2'-deoxyribose 5'-monophosphate in double-stranded DNA + uracil. In terms of biological role, uracil-DNA glycosylase that hydrolyzes the N-glycosidic bond between uracil and deoxyribose in single- and double-stranded DNA (ssDNA and dsDNA) to release a free uracil residue and form an abasic (apurinic/apyrimidinic; AP) site. Excises uracil residues arising as a result of misincorporation of dUMP residues by DNA polymerase during replication or due to spontaneous or enzymatic deamination of cytosine. Mediates error-free base excision repair (BER) of uracil at replication forks. According to the model, it is recruited by PCNA to S-phase replication forks to remove misincorporated uracil at U:A base mispairs in nascent DNA strands. Via trimeric RPA it is recruited to ssDNA stretches ahead of the polymerase to allow detection and excision of deaminated cytosines prior to replication. The resultant AP sites temporarily stall replication, allowing time to repair the lesion. Mediates mutagenic uracil processing involved in antibody affinity maturation. Processes AICDA-induced U:G base mispairs at variable immunoglobulin (Ig) regions leading to the generation of transversion mutations. Operates at switch sites of Ig constant regions where it mediates Ig isotype class switch recombination. Excises AICDA-induced uracil residues forming AP sites that are subsequently nicked by APEX1 endonuclease. The accumulation of staggered nicks in opposite strands results in double strand DNA breaks that are finally resolved via non-homologous end joining repair pathway. This is Uracil-DNA glycosylase from Homo sapiens (Human).